The sequence spans 515 residues: 3,4-dehydroadipyl-CoA semialdehyde dehydrogenase (515 aa).

Residues Glu-255 and Cys-294 contribute to the active site. A disordered region spans residues 470–515 (VMPTCLHGGPRARRRRRGVGRSARAGDVSPPLRRAGRPRGAGSPVA). Residues 479–488 (PRARRRRRGV) are compositionally biased toward basic residues. Low complexity predominate over residues 489–515 (GRSARAGDVSPPLRRAGRPRGAGSPVA).

This sequence belongs to the aldehyde dehydrogenase family. Homodimer.

The catalysed reaction is (3Z)-6-oxohex-3-enoyl-CoA + NADP(+) + H2O = cis-3,4-dehydroadipyl-CoA + NADPH + 2 H(+). Catalyzes the NADP-dependent oxidation of 3,4-dehydroadipyl-CoA semialdehyde to form cis-3,4-dehydroadipyl-CoA. In Aromatoleum evansii (Azoarcus evansii), this protein is 3,4-dehydroadipyl-CoA semialdehyde dehydrogenase (boxD).